The following is a 180-amino-acid chain: MKNIYIVAGFFVVLVQGSWQHSLQDTEEKSRSFPASQTDPLEDPDQINEDKRHSQGTFTSDYSKYLDSRRAQDFVQWLMNTKRNRNNIAKRHDEFERHAEGTFTSDVSSYLEGQAAKEFIAWLVKGRGRRDFPEEVTIVEELGRRHADGSFSDEMNTILDSLATRDFINWLIQTKITDKK.

The first 20 residues, 1–20 (MKNIYIVAGFFVVLVQGSWQ), serve as a signal peptide directing secretion. Residues 25–59 (DTEEKSRSFPASQTDPLEDPDQINEDKRHSQGTFT) are disordered. S54 bears the Phosphoserine mark. A propeptide spanning residues 84-89 (NRNNIA) is cleaved from the precursor. A phosphoserine mark is found at S105 and S108. R127 carries the post-translational modification Arginine amide. Positions 131-145 (DFPEEVTIVEELGRR) are excised as a propeptide. 2 positions are modified to phosphoserine: S150 and S152.

The protein belongs to the glucagon family. Proglucagon is post-translationally processed in a tissue-specific manner in pancreatic A cells and intestinal L cells. In pancreatic A cells, the major bioactive hormone is glucagon cleaved by PCSK2/PC2. In the intestinal L cells PCSK1/PC1 liberates GLP-1, GLP-2, glicentin and oxyntomodulin. GLP-1 is further N-terminally truncated by post-translational processing in the intestinal L cells resulting in GLP-1(7-37) GLP-1-(7-36)amide. The C-terminal amidation is neither important for the metabolism of GLP-1 nor for its effects on the endocrine pancreas.

It localises to the secreted. In terms of biological role, plays a key role in glucose metabolism and homeostasis. Regulates blood glucose by increasing gluconeogenesis and decreasing glycolysis. A counterregulatory hormone of insulin, raises plasma glucose levels in response to insulin-induced hypoglycemia. Plays an important role in initiating and maintaining hyperglycemic conditions in diabetes. Its function is as follows. Potent stimulator of glucose-dependent insulin release. Also stimulates insulin release in response to IL6. Plays important roles on gastric motility and the suppression of plasma glucagon levels. May be involved in the suppression of satiety and stimulation of glucose disposal in peripheral tissues, independent of the actions of insulin. Has growth-promoting activities on intestinal epithelium. May also regulate the hypothalamic pituitary axis (HPA) via effects on LH, TSH, CRH, oxytocin, and vasopressin secretion. Increases islet mass through stimulation of islet neogenesis and pancreatic beta cell proliferation. Inhibits beta cell apoptosis. Stimulates intestinal growth and up-regulates villus height in the small intestine, concomitant with increased crypt cell proliferation and decreased enterocyte apoptosis. The gastrointestinal tract, from the stomach to the colon is the principal target for GLP-2 action. Plays a key role in nutrient homeostasis, enhancing nutrient assimilation through enhanced gastrointestinal function, as well as increasing nutrient disposal. Stimulates intestinal glucose transport and decreases mucosal permeability. Functionally, significantly reduces food intake. Inhibits gastric emptying in humans. Suppression of gastric emptying may lead to increased gastric distension, which may contribute to satiety by causing a sensation of fullness. In terms of biological role, may modulate gastric acid secretion and the gastro-pyloro-duodenal activity. May play an important role in intestinal mucosal growth in the early period of life. This Mesocricetus auratus (Golden hamster) protein is Pro-glucagon (GCG).